The following is a 512-amino-acid chain: Protein maph-9 (512 aa).

3 disordered regions span residues Ile24–Phe103, Asp168–Lys386, and Gly481–Arg512. Composition is skewed to low complexity over residues Thr30–Gly39 and Ser78–Ala95. Residues Thr178–Lys200 are compositionally biased toward basic and acidic residues. Positions Pro230 to Lys239 are enriched in polar residues. Composition is skewed to basic and acidic residues over residues Lys260–Ser302 and Val310–Lys386. The stretch at Lys267–Arg429 forms a coiled coil. The span at Pro502–Arg512 shows a compositional bias: polar residues.

Expressed in amphid and phasmid ciliated neurons.

Its subcellular location is the cell projection. It is found in the cilium. The protein resides in the cytoplasm. The protein localises to the cytoskeleton. It localises to the cilium axoneme. The protein is Protein maph-9 of Caenorhabditis elegans.